A 21-amino-acid chain; its full sequence is Major outer membrane protein (21 aa).

Disulfide bond interactions within and between MOMP molecules and other components form high molecular-weight oligomers.

The protein resides in the cell outer membrane. Structural rigidity of the outer membrane of elementary bodies and porin forming, permitting diffusion of solutes through the intracellular reticulate body membrane. The sequence is that of Major outer membrane protein from Actinobacillus equuli.